Here is a 244-residue protein sequence, read N- to C-terminus: Guanine nucleotide exchange factor rei-1 (244 aa).

2 coiled-coil regions span residues 6-39 (DQLI…KKQF) and 81-144 (VQQA…KAEK). The disordered stretch occupies residues 221-244 (DQIHQERSSQSSLAPSSDAESDSS). The segment covering 228–238 (SSQSSLAPSSD) has biased composition (low complexity).

Belongs to the SH3BP5 family. Homodimer, tetramer and multimer. Interacts with rab-11.1. Binds preferentially to the GDP-bound form of rab-11.1. In terms of tissue distribution, expressed in germ cells.

The protein resides in the cytoplasmic granule. It is found in the golgi apparatus membrane. In terms of biological role, guanine nucleotide exchange factor for Rab GTPase Rab-11.1. Spatially and temporally regulates the distribution of Rab-11.1 to target membranes during embryogenesis. Plays a role in cytokinesis, probably by targeting rab-11.1 to the cleavage furrows. The sequence is that of Guanine nucleotide exchange factor rei-1 from Caenorhabditis elegans.